Reading from the N-terminus, the 162-residue chain is UPF0114 protein Psyr_4257 (162 aa).

Helical transmembrane passes span 15-35 (LLAP…LKFF), 53-73 (LILV…LVMV), 109-129 (VAAS…MDAT), and 136-156 (LMWY…MGYL).

Belongs to the UPF0114 family.

Its subcellular location is the cell membrane. The chain is UPF0114 protein Psyr_4257 from Pseudomonas syringae pv. syringae (strain B728a).